Consider the following 641-residue polypeptide: Probable potassium transport system protein Kup 4 (641 aa).

The next 12 membrane-spanning stretches (helical) occupy residues 31 to 51 (AALGALGIVYGDLGTSPLYTL), 64 to 84 (TASALGILSLLVWTLIITISI), 119 to 139 (ILAVMGLLGAALLYGDGVITP), 155 to 175 (GSLKPFVMPAAVAILIVFFAA), 183 to 203 (IGAAFGPIMLLWFLVIAVLGL), 221 to 241 (AIGFLAHSGGNGMLVLGGVFL), 265 to 285 (WYAIVLPSLLLSYAGQTALLI), 298 to 318 (LCPTWGVYPLVFLAMIATIIA), 355 to 375 (IYVPVVNWMMMVATIGITIAF), 381 to 401 (LAGAYGTAVSTTMLLTTCLLF), 412 to 432 (LAVSILIAGLFLIVDVGFFGA), and 437 to 457 (IAEGGWLPLTFGALVFFLMLT).

This sequence belongs to the HAK/KUP transporter (TC 2.A.72) family.

Its subcellular location is the cell inner membrane. It carries out the reaction K(+)(in) + H(+)(in) = K(+)(out) + H(+)(out). In terms of biological role, transport of potassium into the cell. Likely operates as a K(+):H(+) symporter. The chain is Probable potassium transport system protein Kup 4 from Bradyrhizobium sp. (strain BTAi1 / ATCC BAA-1182).